Consider the following 206-residue polypeptide: Putative 3-methyladenine DNA glycosylase (206 aa).

This sequence belongs to the DNA glycosylase MPG family.

The protein is Putative 3-methyladenine DNA glycosylase of Rhodopseudomonas palustris (strain ATCC BAA-98 / CGA009).